The following is a 204-amino-acid chain: Putative copper-binding protein (204 aa).

3 residues coordinate Cu cation: Cys-77, Cys-81, and His-166.

The protein belongs to the SCO1/2 family.

This chain is Putative copper-binding protein (scoP), found in Stutzerimonas stutzeri (Pseudomonas stutzeri).